A 521-amino-acid polypeptide reads, in one-letter code: MSGETEIDDPEVSDGASENDYSDHEQELDVVGKEDDNQEMAEQKVRPDGDENGNTVGAAATATKPKFDPKDPLRPRRKKARRACFACQRAHLTCGDERPCQRCIKRGLADACQDGVRKKAKYLHDAPPEALRPVLGPTYNQQVSNNRATAASTPTEPSTGMGNFFTQPDTSPSYPLFAANQQGQMPPPLQNRLSFGSNQPSPISPTFHTVGNRPAGMQGISLPQVSNDSHAAFGGGAFFDPSNPALFNFDLEGLNFGNHYGALEFGMLGHMASGSAETPPQDSSAGMPQNVGDLGYNNNPAFNNNPPFNQIYSHDALPDFAVAPPGAHRPAKRQDTKSGPSGKLGPSSALGKRNRDPSSIYDTVHEPYSYTTGFHSLTAFIQKRFSPNKTLRIAKSLASIRPSFISCTKTLNRQDLVFMEKCFQRTLFEYEDFMLNCCTPTLVCRRTGEIAAVNKEFTLLTGWRKEVLLGNEPNLNINTGNSGASSSGSSGRGSFTTPRMRPINLVDSNTASLNSTKILQD.

Residues 1–12 are compositionally biased toward acidic residues; sequence MSGETEIDDPEV. The disordered stretch occupies residues 1–75; sequence MSGETEIDDP…KFDPKDPLRP (75 aa). Composition is skewed to basic and acidic residues over residues 21 to 49 and 65 to 74; these read YSDHEQELDVVGKEDDNQEMAEQKVRPDG and PKFDPKDPLR. The zn(2)-C6 fungal-type DNA-binding region spans 84 to 112; the sequence is CFACQRAHLTCGDERPCQRCIKRGLADAC. Disordered stretches follow at residues 273 to 308, 322 to 358, and 478 to 501; these read SGSAETPPQDSSAGMPQNVGDLGYNNNPAFNNNPPF, VAPPGAHRPAKRQDTKSGPSGKLGPSSALGKRNRDPS, and NTGNSGASSSGSSGRGSFTTPRMR. The segment covering 275–287 has biased composition (polar residues); that stretch reads SAETPPQDSSAGM. Composition is skewed to low complexity over residues 297–308, 337–351, and 480–494; these read NNNPAFNNNPPF, KSGPSGKLGPSSALG, and GNSGASSSGSSGRGS. In terms of domain architecture, PAS spans 426 to 497; sequence TLFEYEDFML…GSSGRGSFTT (72 aa).

The protein belongs to the ERT1/acuK family.

The protein localises to the nucleus. Transcription factor which regulates nonfermentable carbon utilization. Activator of gluconeogenetic genes. This chain is Transcription activator of gluconeogenesis SS1G_02293, found in Sclerotinia sclerotiorum (strain ATCC 18683 / 1980 / Ss-1) (White mold).